Reading from the N-terminus, the 92-residue chain is PIKKQILPTYIIRNSRRPLKKTQLKRNKSPPFMMWKLQIGSIPPWLKTLHRLGAWMIRTVLFSFYNAPYSLTTLRSLLDQQQMITNPSIDMC.

The sequence is that of Putative protein pog from Acute bee paralysis virus (strain Rothamsted) (ABPV).